The chain runs to 733 residues: Acyl-coenzyme A oxidase (733 aa).

The protein belongs to the acyl-CoA oxidase family. The cofactor is FAD.

It is found in the peroxisome. It carries out the reaction a 2,3-saturated acyl-CoA + O2 = a (2E)-enoyl-CoA + H2O2. It participates in lipid metabolism; peroxisomal fatty acid beta-oxidation. The sequence is that of Acyl-coenzyme A oxidase (POX1) from Eremothecium gossypii (strain ATCC 10895 / CBS 109.51 / FGSC 9923 / NRRL Y-1056) (Yeast).